The primary structure comprises 224 residues: ATP phosphoribosyltransferase (224 aa).

The protein belongs to the ATP phosphoribosyltransferase family. Short subfamily. In terms of assembly, heteromultimer composed of HisG and HisZ subunits.

It is found in the cytoplasm. The catalysed reaction is 1-(5-phospho-beta-D-ribosyl)-ATP + diphosphate = 5-phospho-alpha-D-ribose 1-diphosphate + ATP. It functions in the pathway amino-acid biosynthesis; L-histidine biosynthesis; L-histidine from 5-phospho-alpha-D-ribose 1-diphosphate: step 1/9. Functionally, catalyzes the condensation of ATP and 5-phosphoribose 1-diphosphate to form N'-(5'-phosphoribosyl)-ATP (PR-ATP). Has a crucial role in the pathway because the rate of histidine biosynthesis seems to be controlled primarily by regulation of HisG enzymatic activity. In Cupriavidus taiwanensis (strain DSM 17343 / BCRC 17206 / CCUG 44338 / CIP 107171 / LMG 19424 / R1) (Ralstonia taiwanensis (strain LMG 19424)), this protein is ATP phosphoribosyltransferase.